A 406-amino-acid chain; its full sequence is CRISP/Allergen/PR-1 (406 aa).

An N-terminal signal peptide occupies residues 1-18; sequence MHFQVILMMMWLWLEAEG. N-linked (GlcNAc...) asparagine glycosylation is present at Asn39. The 148-residue stretch at 58–205 folds into the SCP domain; the sequence is LREHNKLRSR…TFKDLYTCNY (148 aa).

Belongs to the CRISP family. In terms of processing, contains 9 disulfide bonds. Expressed by the venom gland.

Its subcellular location is the secreted. This is CRISP/Allergen/PR-1 from Trittame loki (Brush-footed trapdoor spider).